A 337-amino-acid polypeptide reads, in one-letter code: Autophagy protein 5 (337 aa).

A Glycyl lysine isopeptide (Lys-Gly) (interchain with G-Cter in ATG12) cross-link involves residue lysine 128. Residues 271-290 (RAQTSGEERSIDDTEEADGS) form a disordered region. A compositionally biased stretch (basic and acidic residues) spans 276 to 290 (GEERSIDDTEEADGS).

Belongs to the ATG5 family. As to quaternary structure, conjugated to ATG12. In terms of processing, conjugated to ATG12; which is essential for autophagy. Conjugation with ATG12 involves ATG7 as an E1-like activating enzyme and ATG10 as an E2-like conjugating enzyme. In terms of tissue distribution, ubiquitous.

The protein localises to the cytoplasm. Its function is as follows. Required for autophagy. Conjugation to ATG12 is essential for plant nutrient recycling. Involved in a negative feedback loop that modulates NPR1-dependent salicylic acid (SA) signaling and limits senescence and immunity-related programmed cell death (PCD) in plants. Involved in complete proteolysis of chloroplast stroma proteins in senescent leaves. Involved in the degradation of damaged peroxisomes. In Arabidopsis thaliana (Mouse-ear cress), this protein is Autophagy protein 5.